Here is a 498-residue protein sequence, read N- to C-terminus: Envelop protein OPG153 (498 aa).

Cys-43 and Cys-342 are oxidised to a cystine. The segment at 352–391 (ATDTGHHQDSKINIKDDDVDDDDYNPKPTPIPEPYPRPPF) is disordered. The segment covering 355-367 (TGHHQDSKINIKD) has biased composition (basic and acidic residues). Positions 378–390 (KPTPIPEPYPRPP) are enriched in pro residues.

It belongs to the orthopoxvirus OPG153 protein family. In terms of assembly, interacts with proteins OPG094 and OPG143. Interacts with OPG154. Interacts with OPG152. Interacts with host laminin.

The protein localises to the virion membrane. Functionally, envelop protein that mediates acid-dependent endocytosis into host cells. Plays an important role in endocytic entry of the virus by acting as an acid-sensitive membrane fusion suppressor. Low pH in host endosomes triggers conformational changes to allow de-repression of viral fusion complex activity and membrane fusion within vesicles. Also plays a role in bridging the mature virion with structural protein OPG152. The protein is Envelop protein OPG153 (Protein OPG153) of Variola virus (isolate Human/India/Ind3/1967) (VARV).